The primary structure comprises 350 residues: tRNA uridine(34) hydroxylase (350 aa).

Residues 146 to 240 (DDPDALFIDM…YARKAREQGL (95 aa)) enclose the Rhodanese domain. Cysteine 200 acts as the Cysteine persulfide intermediate in catalysis.

It belongs to the TrhO family.

It catalyses the reaction uridine(34) in tRNA + AH2 + O2 = 5-hydroxyuridine(34) in tRNA + A + H2O. Its function is as follows. Catalyzes oxygen-dependent 5-hydroxyuridine (ho5U) modification at position 34 in tRNAs, the first step in 5-carboxymethoxyuridine (cmo5U) biosynthesis. May be part of an alternate pathway, which is able to bypass cmo5U biogenesis in a subset of tRNAs under aerobic conditions. In Escherichia coli O45:K1 (strain S88 / ExPEC), this protein is tRNA uridine(34) hydroxylase.